The following is a 261-amino-acid chain: Ribonuclease PH (261 aa).

Residues Arg-87 and Gly-125–Arg-127 each bind phosphate.

This sequence belongs to the RNase PH family. Homohexameric ring arranged as a trimer of dimers.

The catalysed reaction is tRNA(n+1) + phosphate = tRNA(n) + a ribonucleoside 5'-diphosphate. In terms of biological role, phosphorolytic 3'-5' exoribonuclease that plays an important role in tRNA 3'-end maturation. Removes nucleotide residues following the 3'-CCA terminus of tRNAs; can also add nucleotides to the ends of RNA molecules by using nucleoside diphosphates as substrates, but this may not be physiologically important. Probably plays a role in initiation of 16S rRNA degradation (leading to ribosome degradation) during starvation. This chain is Ribonuclease PH, found in Desulforudis audaxviator (strain MP104C).